The sequence spans 182 residues: Probable RNA 2'-phosphotransferase (182 aa).

Belongs to the KptA/TPT1 family.

Its function is as follows. Removes the 2'-phosphate from RNA via an intermediate in which the phosphate is ADP-ribosylated by NAD followed by a presumed transesterification to release the RNA and generate ADP-ribose 1''-2''-cyclic phosphate (APPR&gt;P). May function as an ADP-ribosylase. The protein is Probable RNA 2'-phosphotransferase of Pseudomonas aeruginosa (strain UCBPP-PA14).